A 444-amino-acid chain; its full sequence is Tol-Pal system protein TolB (444 aa).

An N-terminal signal peptide occupies residues 1–18; the sequence is MRNIIYFILLLFSCTGYA.

This sequence belongs to the TolB family. In terms of assembly, the Tol-Pal system is composed of five core proteins: the inner membrane proteins TolA, TolQ and TolR, the periplasmic protein TolB and the outer membrane protein Pal. They form a network linking the inner and outer membranes and the peptidoglycan layer.

It is found in the periplasm. Part of the Tol-Pal system, which plays a role in outer membrane invagination during cell division and is important for maintaining outer membrane integrity. The protein is Tol-Pal system protein TolB of Rickettsia canadensis (strain McKiel).